The chain runs to 210 residues: Proteasome subunit beta (210 aa).

The propeptide at Met-1–Gly-9 is removed in mature form; by autocatalysis. The active-site Nucleophile is Thr-10.

The protein belongs to the peptidase T1B family. As to quaternary structure, the 20S proteasome core is composed of 14 alpha and 14 beta subunits that assemble into four stacked heptameric rings, resulting in a barrel-shaped structure. The two inner rings, each composed of seven catalytic beta subunits, are sandwiched by two outer rings, each composed of seven alpha subunits. The catalytic chamber with the active sites is on the inside of the barrel. Has a gated structure, the ends of the cylinder being occluded by the N-termini of the alpha-subunits. Is capped at one or both ends by the proteasome regulatory ATPase, PAN.

The protein localises to the cytoplasm. It carries out the reaction Cleavage of peptide bonds with very broad specificity.. The formation of the proteasomal ATPase PAN-20S proteasome complex, via the docking of the C-termini of PAN into the intersubunit pockets in the alpha-rings, triggers opening of the gate for substrate entry. Interconversion between the open-gate and close-gate conformations leads to a dynamic regulation of the 20S proteasome proteolysis activity. Functionally, component of the proteasome core, a large protease complex with broad specificity involved in protein degradation. The chain is Proteasome subunit beta from Methanosarcina mazei (strain ATCC BAA-159 / DSM 3647 / Goe1 / Go1 / JCM 11833 / OCM 88) (Methanosarcina frisia).